A 549-amino-acid polypeptide reads, in one-letter code: MAKDILFDVRAREAILRGVNILADAVKVTLGPKGRNVVIEKSFGSPTITKDGVTVAKEIELENKFENMGAQMVKEVASKTSDVAGDGTTTATVLAQAIFREGAKLVAAGHNPMDIKRGIDKAVGAIVAELKKLAKPTKDKKEIAQVGTISANGDETIGTIIADAMEKVGKEGVITVEEAKGLETTLDVVEGMQFDRGYLSPYFVTDPERMEAALNDALILINEKKISSMKDLLPILEQVARAGKPLLIIAEDIEGEALATLVVNKIRGVLNVCAVKAPGFGDRRKAMLEDIATLTGGRMIAEDLGIKLDTITLQDLGRAKRITVDKDNTTIVDGAGGQQEIEARVKQIRAQIEETSSDYDREKLQERLAKLVGGVAVINVGAATETEMKEKKARVEDALNATRAAVEEGVVPGGGVAYIRCLKALDGLQLSGGEKFGVDIIRRAVEEPLRQIVGNGGLEGSVVVNKVKESSGPFGFNAATGTYEDLLAAGVIDPAKVSRTALQNAASVSSLMLTTEAMVAERPKEEKDLPAGGGMGGMGGMGGMGGMGM.

ATP-binding positions include 29–32, lysine 50, 86–90, glycine 414, 477–479, and aspartate 493; these read TLGP, DGTTT, and NAA.

Belongs to the chaperonin (HSP60) family. In terms of assembly, forms a cylinder of 14 subunits composed of two heptameric rings stacked back-to-back. Interacts with the co-chaperonin GroES.

It localises to the cytoplasm. The catalysed reaction is ATP + H2O + a folded polypeptide = ADP + phosphate + an unfolded polypeptide.. Functionally, together with its co-chaperonin GroES, plays an essential role in assisting protein folding. The GroEL-GroES system forms a nano-cage that allows encapsulation of the non-native substrate proteins and provides a physical environment optimized to promote and accelerate protein folding. The sequence is that of Chaperonin GroEL 2 from Myxococcus xanthus (strain DK1622).